The primary structure comprises 102 residues: MAKQKIRIRLKAYDHRILDQSAEKIVETAKRSGASVSGPIPLPTEKSIYTVLRAVHKYKDSREQFEMRTHKRLIDIVNPTPQTVDSLMRLDLPSGVDIEIKL.

Belongs to the universal ribosomal protein uS10 family. In terms of assembly, part of the 30S ribosomal subunit.

Functionally, involved in the binding of tRNA to the ribosomes. The protein is Small ribosomal subunit protein uS10 of Listeria innocua serovar 6a (strain ATCC BAA-680 / CLIP 11262).